The following is a 503-amino-acid chain: Aromatase (503 aa).

Cys437 is a heme binding site.

It belongs to the cytochrome P450 family. It depends on heme as a cofactor.

Its subcellular location is the membrane. It catalyses the reaction testosterone + 3 reduced [NADPH--hemoprotein reductase] + 3 O2 = 17beta-estradiol + formate + 3 oxidized [NADPH--hemoprotein reductase] + 4 H2O + 4 H(+). It carries out the reaction androst-4-ene-3,17-dione + 3 reduced [NADPH--hemoprotein reductase] + 3 O2 = estrone + formate + 3 oxidized [NADPH--hemoprotein reductase] + 4 H2O + 4 H(+). Its function is as follows. Catalyzes the formation of aromatic C18 estrogens from C19 androgens. The polypeptide is Aromatase (CYP19A1) (Oryctolagus cuniculus (Rabbit)).